The sequence spans 92 residues: Large ribosomal subunit protein uL23 (92 aa).

The protein belongs to the universal ribosomal protein uL23 family. In terms of assembly, part of the 50S ribosomal subunit. Contacts protein L29, and trigger factor when it is bound to the ribosome.

Functionally, one of the early assembly proteins it binds 23S rRNA. One of the proteins that surrounds the polypeptide exit tunnel on the outside of the ribosome. Forms the main docking site for trigger factor binding to the ribosome. In Bdellovibrio bacteriovorus (strain ATCC 15356 / DSM 50701 / NCIMB 9529 / HD100), this protein is Large ribosomal subunit protein uL23.